We begin with the raw amino-acid sequence, 69 residues long: Conotoxin Lp3.1 (69 aa).

The first 20 residues, 1–20, serve as a signal peptide directing secretion; it reads MLKMGVLLFIFLVLFPLTTL. Positions 21–54 are excised as a propeptide; sequence ELDTDRPVERHAAIKQDLKPQERRGIRLHAPRDE. Cystine bridges form between Cys55–Cys67, Cys56–Cys65, and Cys61–Cys68.

Belongs to the conotoxin M superfamily. In terms of tissue distribution, expressed by the venom duct.

The protein resides in the secreted. The protein is Conotoxin Lp3.1 of Conus leopardus (Leopard cone).